We begin with the raw amino-acid sequence, 293 residues long: Protease HtpX homolog (293 aa).

2 helical membrane passes run 7 to 26 (ASLL…ALLG) and 30 to 49 (GMVM…WYYS). Histidine 131 is a Zn(2+) binding site. Residue glutamate 132 is part of the active site. Histidine 135 contacts Zn(2+). 2 helical membrane-spanning segments follow: residues 148 to 168 (ATLA…FWFF) and 180 to 200 (IGAL…QLGI). Glutamate 205 is a binding site for Zn(2+).

It belongs to the peptidase M48B family. Zn(2+) serves as cofactor.

It localises to the cell inner membrane. The polypeptide is Protease HtpX homolog (Acaryochloris marina (strain MBIC 11017)).